The chain runs to 734 residues: Photosystem I P700 chlorophyll a apoprotein A2 (734 aa).

8 helical membrane passes run 46–69, 135–158, 175–199, 273–291, 330–353, 369–395, 417–439, and 517–535; these read IFAS…FHVA, LYIG…LHLQ, LNHH…HVAI, MAHH…GHMY, LHFQ…QHMY, AALY…IFFI, AIIS…LYVH, and FLVH…LILV. Residues Cys559 and Cys568 each coordinate [4Fe-4S] cluster. The next 2 membrane-spanning stretches (helical) occupy residues 575–596 and 643–665; these read AFYL…YWHW and LSVW…MFLI. Positions 654, 662, and 670 each coordinate chlorophyll a. Trp671 is a phylloquinone binding site. The helical transmembrane segment at 707 to 727 threads the bilayer; that stretch reads LVGLAHFSVGYIFTYAAFLIA.

The protein belongs to the PsaA/PsaB family. As to quaternary structure, the PsaA/B heterodimer binds the P700 chlorophyll special pair and subsequent electron acceptors. PSI consists of a core antenna complex that captures photons, and an electron transfer chain that converts photonic excitation into a charge separation. The eukaryotic PSI reaction center is composed of at least 11 subunits. It depends on P700 is a chlorophyll a/chlorophyll a' dimer, A0 is one or more chlorophyll a, A1 is one or both phylloquinones and FX is a shared 4Fe-4S iron-sulfur center. as a cofactor.

Its subcellular location is the plastid. The protein resides in the chloroplast thylakoid membrane. It catalyses the reaction reduced [plastocyanin] + hnu + oxidized [2Fe-2S]-[ferredoxin] = oxidized [plastocyanin] + reduced [2Fe-2S]-[ferredoxin]. Functionally, psaA and PsaB bind P700, the primary electron donor of photosystem I (PSI), as well as the electron acceptors A0, A1 and FX. PSI is a plastocyanin-ferredoxin oxidoreductase, converting photonic excitation into a charge separation, which transfers an electron from the donor P700 chlorophyll pair to the spectroscopically characterized acceptors A0, A1, FX, FA and FB in turn. Oxidized P700 is reduced on the lumenal side of the thylakoid membrane by plastocyanin. In Populus alba (White poplar), this protein is Photosystem I P700 chlorophyll a apoprotein A2.